A 278-amino-acid chain; its full sequence is 4-diphosphocytidyl-2-C-methyl-D-erythritol kinase (278 aa).

The active site involves lysine 9. Residue 89–99 (PVASGIGGGSA) participates in ATP binding. Aspartate 128 is a catalytic residue.

Belongs to the GHMP kinase family. IspE subfamily.

It carries out the reaction 4-CDP-2-C-methyl-D-erythritol + ATP = 4-CDP-2-C-methyl-D-erythritol 2-phosphate + ADP + H(+). Its pathway is isoprenoid biosynthesis; isopentenyl diphosphate biosynthesis via DXP pathway; isopentenyl diphosphate from 1-deoxy-D-xylulose 5-phosphate: step 3/6. Catalyzes the phosphorylation of the position 2 hydroxy group of 4-diphosphocytidyl-2C-methyl-D-erythritol. This is 4-diphosphocytidyl-2-C-methyl-D-erythritol kinase from Cereibacter sphaeroides (strain KD131 / KCTC 12085) (Rhodobacter sphaeroides).